The chain runs to 326 residues: Phospholipid scramblase 4 (326 aa).

Residues Met-1–Asp-32 form a disordered region. Positions Met-1–Met-94 are proline-rich domain (PRD). Residues Met-1–Lys-299 lie on the Cytoplasmic side of the membrane. An SH3-binding 1 motif is present at residues Asn-18–Ala-25. A PPxY motif motif is present at residues Pro-30–Tyr-33. The SH3-binding 2 motif lies at Pro-41–Ser-49. 2 positions are modified to phosphotyrosine; by ABL: Tyr-79 and Tyr-84. Positions Met-94 to Val-102 match the SH3-binding 3 motif. 5 S-palmitoyl cysteine lipidation sites follow: Cys-193, Cys-194, Cys-195, Cys-197, and Cys-198. The chain crosses the membrane as a helical span at residues Met-300 to Phe-316. Residues Glu-317–Arg-326 lie on the Extracellular side of the membrane.

This sequence belongs to the phospholipid scramblase family. Interacts with PDCD6. Interacts with KPNA2; this interaction mediates the nucleus import of PLSCR4. It depends on Ca(2+) as a cofactor. Mg(2+) serves as cofactor. Requires Zn(2+) as cofactor.

The protein resides in the cell membrane. It localises to the nucleus. It carries out the reaction a 1,2-diacyl-sn-glycero-3-phosphocholine(in) = a 1,2-diacyl-sn-glycero-3-phosphocholine(out). It catalyses the reaction a 1,2-diacyl-sn-glycero-3-phospho-L-serine(in) = a 1,2-diacyl-sn-glycero-3-phospho-L-serine(out). Its function is as follows. Catalyzes metal ion-induced ATP-independent rapid bidirectional and non-specific movement of phospholipids (lipid scrambling or lipid flip-flop) between the inner and outer leaflet of the plasma membrane and participates in the redistribution of phospholipids between membrane leaflets. Metal ions bind to the calcium-binding site and induce conformation change in the protein. Has a greater affi nity for Ca(2+) than Mg(2+) and Zn(2+). This chain is Phospholipid scramblase 4, found in Mus musculus (Mouse).